Reading from the N-terminus, the 340-residue chain is MEQTLRVSVFGATGYTGIELLRSLLTHPHFEVKNLISQSYKGKKVREVLPFFSNTYISEIEFLEEPVEDYELAFLCLPHEVSYEIVPKLLSQGKKVVDLSGAYRIKSPKAYEEFYGFKHEREDILQRAVYGLPEVFREEIKNSDLVANPGCYPTATLLAIYPFLKERVGIESVIVHALSGVSGAGRKPKQQFHFPEMTENFFNYAVEKHRHTPEMEDVIRRVYGREVKVRFTPTVVPTSRGMISTVYLKSEKLNVKELFKEVYEDEIFVKVVDEPPQTKWVLGTNYCFIYPHYDERTGYYVIISAIDNLGKGASLQAVQNANLMFGLAEDDGLLQLPVFP.

Cys-151 is a catalytic residue.

Belongs to the NAGSA dehydrogenase family. Type 1 subfamily.

Its subcellular location is the cytoplasm. It carries out the reaction N-acetyl-L-glutamate 5-semialdehyde + phosphate + NADP(+) = N-acetyl-L-glutamyl 5-phosphate + NADPH + H(+). Its pathway is amino-acid biosynthesis; L-arginine biosynthesis; N(2)-acetyl-L-ornithine from L-glutamate: step 3/4. Catalyzes the NADPH-dependent reduction of N-acetyl-5-glutamyl phosphate to yield N-acetyl-L-glutamate 5-semialdehyde. The protein is N-acetyl-gamma-glutamyl-phosphate reductase of Aquifex aeolicus (strain VF5).